Consider the following 2523-residue polypeptide: uncharacterized protein (2523 aa).

Belongs to the mycobacterial PPE family.

Functionally, probably plays a role in host phagosome maturation arrest. This is an uncharacterized protein from Mycobacterium tuberculosis (strain ATCC 25618 / H37Rv).